The primary structure comprises 620 residues: Glutathione-regulated potassium-efflux system protein KefC (620 aa).

12 helical membrane passes run 4 to 24 (HTLI…PIAV), 26 to 46 (LGLG…PWGL), 54 to 74 (SILH…GLEL), 90 to 110 (GALQ…LLGL), 114 to 134 (VAEL…MQAM), 149 to 169 (FAVL…IPLL), 178 to 198 (MGAF…VVLL), 218 to 238 (VFSA…EEVG), 270 to 290 (GLLL…GTLL), 294 to 314 (LRIV…LWLI), 327 to 347 (WFAV…GAAQ), and 359 to 379 (SLTL…VILN). An RCK N-terminal domain is found at 399 to 518 (QPRVIIAGFG…AGVEKPERET (120 aa)). Residues 597–620 (GWQGTEEGKHTGNMADEPETKPSS) are disordered.

It belongs to the monovalent cation:proton antiporter 2 (CPA2) transporter (TC 2.A.37) family. KefC subfamily. As to quaternary structure, homodimer. Interacts with the regulatory subunit KefF.

It localises to the cell inner membrane. In terms of biological role, pore-forming subunit of a potassium efflux system that confers protection against electrophiles. Catalyzes K(+)/H(+) antiport. The polypeptide is Glutathione-regulated potassium-efflux system protein KefC (Escherichia coli O6:K15:H31 (strain 536 / UPEC)).